Reading from the N-terminus, the 349-residue chain is Xylitol-binding protein (349 aa).

Positions 1–22 (MNITSKIGAIAAAGAVGLGLTA) are cleaved as a signal peptide. Cys-23 carries the N-palmitoyl cysteine lipid modification. The S-diacylglycerol cysteine moiety is linked to residue Cys-23. Positions 42, 121, 173, 224, 249, and 269 each coordinate xylitol.

This sequence belongs to the bacterial solute-binding protein 2 family.

It localises to the cell membrane. Part of an ABC transporter complex likely involved in xylitol import. Binds xylitol. In Mycolicibacterium smegmatis (strain ATCC 700084 / mc(2)155) (Mycobacterium smegmatis), this protein is Xylitol-binding protein.